Here is a 144-residue protein sequence, read N- to C-terminus: UPF0735 ACT domain-containing protein LCABL_12100 (144 aa).

An ACT domain is found at 68–143 (VISLMLHHDR…GVSDVHLVSV (76 aa)).

Belongs to the UPF0735 family.

The sequence is that of UPF0735 ACT domain-containing protein LCABL_12100 from Lacticaseibacillus casei (strain BL23) (Lactobacillus casei).